The sequence spans 235 residues: Putative cobalt transport protein CbiM 2 (235 aa).

7 helical membrane-spanning segments follow: residues 8 to 28, 40 to 60, 74 to 94, 107 to 127, 135 to 155, 160 to 180, and 185 to 205; these read LPAI…AYGV, GILP…SLKM, GIGA…IVLI, TLGA…YLIY, LNFY…TYIV, LALA…SSFS, and IFAI…ALLF.

The protein belongs to the CbiM family. In terms of assembly, forms an energy-coupling factor (ECF) transporter complex composed of an ATP-binding protein (A component, CbiO), a transmembrane protein (T component, CbiQ) and 2 possible substrate-capture proteins (S components, CbiM and CbiN) of unknown stoichimetry.

Its subcellular location is the cell membrane. The protein operates within cofactor biosynthesis; adenosylcobalamin biosynthesis. Part of the energy-coupling factor (ECF) transporter complex CbiMNOQ involved in cobalt import. The polypeptide is Putative cobalt transport protein CbiM 2 (Methanosarcina barkeri (strain Fusaro / DSM 804)).